The chain runs to 1905 residues: Tudor domain-containing 6-like (1905 aa).

Tudor domains are found at residues 1-30 (MVEVYFIDHGNTEMVDWYNVKKLPAELREM), 215-279 (YERG…LFDL), and 435-491 (SVTP…AYEL). A disordered region spans residues 564-795 (SRAEGSFGNS…SKLTPPLSKL (232 aa)). A compositionally biased stretch (basic and acidic residues) spans 573 to 591 (SEKRNQLNDLDRGGRKETT). The segment covering 592–602 (SKFQPYSQGSK) has biased composition (polar residues). The segment covering 622–631 (FQTKEREQFE) has biased composition (basic and acidic residues). Polar residues-rich tracts occupy residues 651-660 (VQKNMSQSGF) and 687-704 (LYSQGRETPSMSQNSSYS). Residues 715-726 (RSKERQVSEHKQ) are compositionally biased toward basic and acidic residues. 2 stretches are compositionally biased toward polar residues: residues 746–766 (KASQNGSSSQTEAFWSSGSDQ) and 774–787 (NASQQRRSTFQESK). Tudor domains follow at residues 853–910 (YVNL…LLSI) and 1060–1118 (EIEV…IAAI). 4 disordered regions span residues 1213 to 1245 (IEDNVIPSQADEDDHSEPSEEPCASESIETPAV), 1449 to 1599 (EDFE…TETE), 1655 to 1682 (VEDLDTENQESQICISGSDNRSKESGPV), and 1827 to 1905 (ESPA…APSV). Composition is skewed to acidic residues over residues 1491–1500 (EAEGLEDQDQ) and 1522–1535 (EQAEDLVPEEDPGT). Over residues 1553 to 1588 (SQEHKDFPEQEEDRVAEHKNDISEPDLQSKEQKEDL) the composition is skewed to basic and acidic residues. The segment covering 1663–1673 (QESQICISGSD) has biased composition (polar residues). Residues 1876–1887 (FEPETDDMEQME) show a composition bias toward acidic residues.

Interacts with FRGY2 (a component of messenger ribonucleoprotein (mRNP) particle) during germ cell development. Expressed in testis.

It is found in the cytoplasm. Its function is as follows. Tudor domain-containing protein involved in germ cell development, more specifically the formation of chromatoid body (during spermiogenesis), Balbiani body (during oogenesis), germ plasm (upon fertilization), and for proper miRNA expression and spliceosome maturation. Component of cytoplasmic mRNP particle through interaction with FRGY2, and binds to maternal mRNA related to cell cycle (RCC1, RHAMM, INCENP-A, MAD2L1, HELLS) and a germ plasm specific mRNA (Dead end/Dnd1), it is proposed a role in translational activation of the maternal mRNAs repressed in mRNP particle. The polypeptide is Tudor domain-containing 6-like (Xenopus laevis (African clawed frog)).